The sequence spans 294 residues: 4-diphosphocytidyl-2-C-methyl-D-erythritol kinase (294 aa).

K15 is a catalytic residue. 101–111 (PSEAGLGGGSS) contributes to the ATP binding site. The active site involves D143.

The protein belongs to the GHMP kinase family. IspE subfamily.

The enzyme catalyses 4-CDP-2-C-methyl-D-erythritol + ATP = 4-CDP-2-C-methyl-D-erythritol 2-phosphate + ADP + H(+). Its pathway is isoprenoid biosynthesis; isopentenyl diphosphate biosynthesis via DXP pathway; isopentenyl diphosphate from 1-deoxy-D-xylulose 5-phosphate: step 3/6. Functionally, catalyzes the phosphorylation of the position 2 hydroxy group of 4-diphosphocytidyl-2C-methyl-D-erythritol. In Fusobacterium nucleatum subsp. nucleatum (strain ATCC 25586 / DSM 15643 / BCRC 10681 / CIP 101130 / JCM 8532 / KCTC 2640 / LMG 13131 / VPI 4355), this protein is 4-diphosphocytidyl-2-C-methyl-D-erythritol kinase.